The following is a 461-amino-acid chain: Glycerol-3-phosphate acyltransferase, chloroplastic (461 aa).

Residues 1-96 constitute a chloroplast transit peptide; the sequence is MSMTGSSAYY…SPPNMSASVS (96 aa). A compositionally biased stretch (low complexity) spans 47–76; that stretch reads LLSSTSSSSSSSISLRSSTAPSPSCSSVTP. A disordered region spans residues 47–88; the sequence is LLSSTSSSSSSSISLRSSTAPSPSCSSVTPKDNCLASAKHSP. Residues 231–236 carry the HXXXXD motif motif; it reads HQTEAD.

The protein belongs to the GPAT/DAPAT family.

The protein resides in the plastid. It localises to the chloroplast stroma. It catalyses the reaction sn-glycerol 3-phosphate + an acyl-CoA = a 1-acyl-sn-glycero-3-phosphate + CoA. It participates in phospholipid metabolism; CDP-diacylglycerol biosynthesis; CDP-diacylglycerol from sn-glycerol 3-phosphate: step 1/3. Esterifies acyl-group from acyl-ACP to the sn-1 position of glycerol-3-phosphate. The enzyme from chilling-resistant plants discriminates against non-fluid palmitic acid and selects oleic acid whereas the enzyme from sensitive plants accepts both fatty acids. This is Glycerol-3-phosphate acyltransferase, chloroplastic (PLSB) from Phaseolus vulgaris (Kidney bean).